A 408-amino-acid chain; its full sequence is MSAPKKVVLAYSGGLDTSIILKWLQTEYGCEVVTFTADLGQGEELEPAREKAVMLGIKPENIFIEDVREEFVRDFVFPMFRANALYEGLYLLGTSIARPLIAKRLVEIAAQTGADAVAHGATGKGNDQVRFELTAYALDPAIKVIAPWREWDLTSRTKLLEFAEQNQIPIAKNKRGEAPFSVDANLLHTSSEGRVLENPGEEAPDYVYQRTVDPEKAPDAPEFVEIAFEKGDAVAINGEAMSPATILTKLNELGGKHGVGRLDLVENRFVGMKSRGIYETPGGTILLEAHRGIEQITLDSGAGHLKDSIMPRYAELIYNGFWYSPEREMLQALIDKSQEHVTGTVRVKLYKGFARTVARWSEHSLYSEKHVTFEEDAGAYDQKDAAGFIRLNALRLKLIATRNARVKG.

Residues Ala-10–Ser-18 and Ala-37 contribute to the ATP site. The L-citrulline site is built by Tyr-90 and Ser-95. Gly-120 lines the ATP pocket. Thr-122, Asn-126, and Asp-127 together coordinate L-aspartate. Asn-126 is a binding site for L-citrulline. Arg-130, Ser-181, Ser-190, Glu-266, and Tyr-278 together coordinate L-citrulline.

The protein belongs to the argininosuccinate synthase family. Type 1 subfamily. In terms of assembly, homotetramer.

Its subcellular location is the cytoplasm. It carries out the reaction L-citrulline + L-aspartate + ATP = 2-(N(omega)-L-arginino)succinate + AMP + diphosphate + H(+). It functions in the pathway amino-acid biosynthesis; L-arginine biosynthesis; L-arginine from L-ornithine and carbamoyl phosphate: step 2/3. The sequence is that of Argininosuccinate synthase from Cereibacter sphaeroides (strain ATCC 17029 / ATH 2.4.9) (Rhodobacter sphaeroides).